Here is a 348-residue protein sequence, read N- to C-terminus: MVNNFSQAEAVELCYKNVNESCIKTPYSPGPRSILYAVLGFGAVLAAFGNLLVMIAILHFKQLHTPTNFLIASLACADFLVGVTVMPFSTVRSVESCWYFGDSYCKFHTCFDTSFCFASLFHLCCISVDRYIAVTDPLTYPTKFTVSVSGICIVLSWFFSVTYSFSIFYTGANEEGIEELVVALTCVGGCQAPLNQNWVLLCFLLFFIPNVAMVFIYSKIFLVAKHQARKIESTASQAQSSSESYKERVAKRERKAAKTLGIAMAAFLVSWLPYLVDAVIDAYMNFITPPYVYEILVWCVYYNSAMNPLIYAFFYQWFGKAIKLIVSGKVLRTDSSTTNLFSEEVETD.

Over 1–33 the chain is Extracellular; sequence MVNNFSQAEAVELCYKNVNESCIKTPYSPGPRS. N-linked (GlcNAc...) asparagine glycans are attached at residues N4 and N19. Intrachain disulfides connect C22/C186 and C105/C190. Residues 34 to 58 form a helical membrane-spanning segment; that stretch reads ILYAVLGFGAVLAAFGNLLVMIAIL. Residues 59-68 lie on the Cytoplasmic side of the membrane; it reads HFKQLHTPTN. Residues 69-90 form a helical membrane-spanning segment; sequence FLIASLACADFLVGVTVMPFST. Over 91–105 the chain is Extracellular; the sequence is VRSVESCWYFGDSYC. Residues 106 to 128 form a helical membrane-spanning segment; it reads KFHTCFDTSFCFASLFHLCCISV. Residues D112 and T113 each contribute to the spermidine site. Topologically, residues 129 to 148 are cytoplasmic; the sequence is DRYIAVTDPLTYPTKFTVSV. A helical transmembrane segment spans residues 149–170; sequence SGICIVLSWFFSVTYSFSIFYT. Over 171–196 the chain is Extracellular; the sequence is GANEEGIEELVVALTCVGGCQAPLNQ. The extracellular Loop 2 (ECL2) stretch occupies residues 174-187; that stretch reads EEGIEELVVALTCV. The helical transmembrane segment at 197–218 threads the bilayer; that stretch reads NWVLLCFLLFFIPNVAMVFIYS. At 219–256 the chain is on the cytoplasmic side; the sequence is KIFLVAKHQARKIESTASQAQSSSESYKERVAKRERKA. Residues 257–280 traverse the membrane as a helical segment; the sequence is AKTLGIAMAAFLVSWLPYLVDAVI. Over 281 to 293 the chain is Extracellular; sequence DAYMNFITPPYVY. The helical transmembrane segment at 294–314 threads the bilayer; sequence EILVWCVYYNSAMNPLIYAFF. Residues 315–348 are Cytoplasmic-facing; the sequence is YQWFGKAIKLIVSGKVLRTDSSTTNLFSEEVETD.

The protein belongs to the G-protein coupled receptor 1 family.

Its subcellular location is the cell membrane. Functionally, olfactory receptor specific for trace amines, such as N,N-dimethylcyclohexylamine (DMCHA) and beta-phenylethylamine (beta-PEA). In contrast to mouse and rat orthologs, not activated by triethylamine, cadaverine (CAD) or spermidine. Trace amine compounds are enriched in animal body fluids and act on trace amine-associated receptors (TAARs) to elicit both intraspecific and interspecific innate behaviors. Trace amine-binding causes a conformation change that triggers signaling via G(s)-class of G alpha proteins (GNAL or GNAS). In mature olfactory sensory neurons, TAAR9 is coupled with GNAL/G(olf)G alpha protein and mediates activation of adenylate cyclase activity to activate cAMP signaling and eventually transmit odorant signals to achieve membrane depolarization. In immature olfactory sensory neurons, TAAR9 is coupled with GNAS/G(s) G alpha proteins. The chain is Trace amine-associated receptor 9 from Homo sapiens (Human).